Reading from the N-terminus, the 426-residue chain is Protein CgeD (426 aa).

The protein to B.subtilis spore coat polysaccharide biosynthesis protein SpsA.

May be involved in maturation of the outermost layer of the spore. In Bacillus subtilis (strain 168), this protein is Protein CgeD (cgeD).